A 114-amino-acid polypeptide reads, in one-letter code: Large ribosomal subunit protein uL18 (114 aa).

It belongs to the universal ribosomal protein uL18 family. Part of the 50S ribosomal subunit; part of the 5S rRNA/L5/L18/L25 subcomplex. Contacts the 5S and 23S rRNAs.

Its function is as follows. This is one of the proteins that bind and probably mediate the attachment of the 5S RNA into the large ribosomal subunit, where it forms part of the central protuberance. This Parabacteroides distasonis (strain ATCC 8503 / DSM 20701 / CIP 104284 / JCM 5825 / NCTC 11152) protein is Large ribosomal subunit protein uL18.